We begin with the raw amino-acid sequence, 363 residues long: Adenosine deaminase (363 aa).

N-acetylalanine is present on A2. Zn(2+) is bound by residues H15 and H17. Residues H17 and D19 each coordinate substrate. At K54 the chain carries N6-acetyllysine. G184 contacts substrate. Residue H214 coordinates Zn(2+). E217 serves as the catalytic Proton donor. An N6-acetyllysine modification is found at K232. Residue D295 coordinates Zn(2+). Position 296 (D296) interacts with substrate.

This sequence belongs to the metallo-dependent hydrolases superfamily. Adenosine and AMP deaminases family. As to quaternary structure, interacts with DPP4 (via extracellular domain). Interacts with PLG (via Kringle 4 domain); the interaction stimulates PLG activation when in complex with DPP4. It depends on Zn(2+) as a cofactor. As to expression, expressed in gastrointestinal tissues (at protein level).

It is found in the cell membrane. It localises to the cell junction. Its subcellular location is the cytoplasmic vesicle lumen. The protein resides in the cytoplasm. The protein localises to the lysosome. The enzyme catalyses adenosine + H2O + H(+) = inosine + NH4(+). The catalysed reaction is 2'-deoxyadenosine + H2O + H(+) = 2'-deoxyinosine + NH4(+). It carries out the reaction cordycepin + H2O + H(+) = 3'-deoxyinosine + NH4(+). In terms of biological role, catalyzes the hydrolytic deamination of adenosine and 2-deoxyadenosine. Plays an important role in purine metabolism and in adenosine homeostasis. Modulates signaling by extracellular adenosine, and so contributes indirectly to cellular signaling events. Acts as a positive regulator of T-cell coactivation, by binding DPP4. Its interaction with DPP4 regulates lymphocyte-epithelial cell adhesion. Enhances dendritic cell immunogenicity by affecting dendritic cell costimulatory molecule expression and cytokines and chemokines secretion. Enhances CD4+ T-cell differentiation and proliferation. Acts as a positive modulator of adenosine receptors ADORA1 and ADORA2A, by enhancing their ligand affinity via conformational change. Stimulates plasminogen activation. Plays a role in male fertility. Plays a protective role in early postimplantation embryonic development. Also responsible for the deamination of cordycepin (3'-deoxyadenosine), a fungal natural product that shows antitumor, antibacterial, antifungal, antivirus, and immune regulation properties. This Bos taurus (Bovine) protein is Adenosine deaminase (ADA).